A 559-amino-acid chain; its full sequence is Malate synthase, glyoxysomal (559 aa).

The active-site Proton acceptor is the R173. The active-site Proton donor is D459. The Microbody targeting signal motif lies at 557 to 559 (CKL).

It belongs to the malate synthase family.

It localises to the glyoxysome. It carries out the reaction glyoxylate + acetyl-CoA + H2O = (S)-malate + CoA + H(+). The protein operates within carbohydrate metabolism; glyoxylate cycle; (S)-malate from isocitrate: step 2/2. This Zea mays (Maize) protein is Malate synthase, glyoxysomal (LIP).